Here is a 908-residue protein sequence, read N- to C-terminus: UPF0182 protein NT01CX_0852 (908 aa).

Transmembrane regions (helical) follow at residues 8–28 (IGLFFCIALTVIFLKKIVNVI), 47–67 (FTSVISLFILVFLICFVAIKT), 96–116 (IINALTLIISLFIALNFSLGY), 157–177 (LLSLLILLAVITVIVYMFLNI), 209–229 (LAILGALLLLCISVGYLIKAW), 253–273 (FYIAISIVSIISSIIVAFSIL), and 280–300 (IISCVILIAVLVISERVVSGA).

Belongs to the UPF0182 family.

The protein localises to the cell membrane. This chain is UPF0182 protein NT01CX_0852, found in Clostridium novyi (strain NT).